Reading from the N-terminus, the 433-residue chain is Serine hydroxymethyltransferase (433 aa).

(6S)-5,6,7,8-tetrahydrofolate contacts are provided by residues Leu-132 and 136–138 (GHL). Lys-241 carries the N6-(pyridoxal phosphate)lysine modification.

This sequence belongs to the SHMT family. Homodimer. Requires pyridoxal 5'-phosphate as cofactor.

It is found in the cytoplasm. It carries out the reaction (6R)-5,10-methylene-5,6,7,8-tetrahydrofolate + glycine + H2O = (6S)-5,6,7,8-tetrahydrofolate + L-serine. It functions in the pathway one-carbon metabolism; tetrahydrofolate interconversion. The protein operates within amino-acid biosynthesis; glycine biosynthesis; glycine from L-serine: step 1/1. In terms of biological role, catalyzes the reversible interconversion of serine and glycine with tetrahydrofolate (THF) serving as the one-carbon carrier. This reaction serves as the major source of one-carbon groups required for the biosynthesis of purines, thymidylate, methionine, and other important biomolecules. Also exhibits THF-independent aldolase activity toward beta-hydroxyamino acids, producing glycine and aldehydes, via a retro-aldol mechanism. This Bradyrhizobium sp. (strain ORS 278) protein is Serine hydroxymethyltransferase.